We begin with the raw amino-acid sequence, 108 residues long: Small ribosomal subunit protein uS17 (108 aa).

Belongs to the universal ribosomal protein uS17 family. As to quaternary structure, part of the 30S ribosomal subunit.

In terms of biological role, one of the primary rRNA binding proteins, it binds specifically to the 5'-end of 16S ribosomal RNA. This Methanoregula boonei (strain DSM 21154 / JCM 14090 / 6A8) protein is Small ribosomal subunit protein uS17.